The sequence spans 152 residues: Deoxyuridine 5'-triphosphate nucleotidohydrolase (152 aa).

Substrate-binding positions include 72-74 (RSG), Asn85, and 89-91 (TID).

It belongs to the dUTPase family. It depends on Mg(2+) as a cofactor.

The catalysed reaction is dUTP + H2O = dUMP + diphosphate + H(+). Its pathway is pyrimidine metabolism; dUMP biosynthesis; dUMP from dCTP (dUTP route): step 2/2. In terms of biological role, this enzyme is involved in nucleotide metabolism: it produces dUMP, the immediate precursor of thymidine nucleotides and it decreases the intracellular concentration of dUTP so that uracil cannot be incorporated into DNA. The polypeptide is Deoxyuridine 5'-triphosphate nucleotidohydrolase (Rhodopseudomonas palustris (strain ATCC BAA-98 / CGA009)).